We begin with the raw amino-acid sequence, 348 residues long: Sorbitol dehydrogenase (348 aa).

The Zn(2+) site is built by C40, H65, and E66. Residues I179, D199, R204, V269–I271, and S293–R295 each bind NAD(+). Residue R295 participates in substrate binding.

Belongs to the zinc-containing alcohol dehydrogenase family. In terms of assembly, homotetramer. The cofactor is Zn(2+).

It catalyses the reaction xylitol + NAD(+) = D-xylulose + NADH + H(+). It carries out the reaction L-iditol + NAD(+) = keto-L-sorbose + NADH + H(+). The enzyme catalyses keto-D-fructose + NADH + H(+) = D-sorbitol + NAD(+). Polyol dehydrogenase that catalyzes the reversible NAD(+)-dependent oxidation of various sugar alcohols. Is active with xylitol, L-iditol and D-sorbitol (D-glucitol) as substrates, leading to the C2-oxidized products D-xylulose, L-sorbose and D-fructose, respectively. Is a key enzyme in the polyol pathway that interconverts glucose and fructose via sorbitol, which constitutes an important alternate route for glucose metabolism. The protein is Sorbitol dehydrogenase (SDH) of Bombyx mori (Silk moth).